Consider the following 185-residue polypeptide: uncharacterized protein (185 aa).

This is an uncharacterized protein from Bacillus subtilis (strain 168).